A 545-amino-acid chain; its full sequence is Triacylglycerol lipase ptl1 (545 aa).

Positions 182 to 358 constitute a PNPLA domain; sequence LYFNGGTAFG…EVCTPKNFIW (177 aa). The GXSXG motif lies at 213-217; sequence GCASG.

The protein localises to the lipid droplet. The enzyme catalyses a triacylglycerol + H2O = a diacylglycerol + a fatty acid + H(+). Its function is as follows. Lipid particle-localized triacylglycerol (TAG) lipase. The lipid droplet/particle is a lipid storage compartment which serves as a depot of energy and building blocks for membrane lipid biosynthesis. Involved in the mobilization of the non-polar storage lipids triacylglycerols (TAGs) from lipid particles by hydrolysis of TAGs, releasing and supplying specific fatty acids to the appropriate metabolic pathways. The polypeptide is Triacylglycerol lipase ptl1 (ptl1) (Schizosaccharomyces pombe (strain 972 / ATCC 24843) (Fission yeast)).